The chain runs to 220 residues: Probable nicotinate-nucleotide adenylyltransferase (220 aa).

This sequence belongs to the NadD family.

The enzyme catalyses nicotinate beta-D-ribonucleotide + ATP + H(+) = deamido-NAD(+) + diphosphate. It functions in the pathway cofactor biosynthesis; NAD(+) biosynthesis; deamido-NAD(+) from nicotinate D-ribonucleotide: step 1/1. Catalyzes the reversible adenylation of nicotinate mononucleotide (NaMN) to nicotinic acid adenine dinucleotide (NaAD). This Saccharophagus degradans (strain 2-40 / ATCC 43961 / DSM 17024) protein is Probable nicotinate-nucleotide adenylyltransferase.